Consider the following 264-residue polypeptide: Major prion protein (264 aa).

Positions 1 to 24 (MVKSHIGSWILVLFVAMWSDVGLC) are cleaved as a signal peptide. Residues 25-41 (KKRPKPGGGWNTGGSRY) form an interaction with ADGRG6 region. The segment at 25–241 (KKRPKPGGGW…ESQAYYQRGA (217 aa)) is interaction with GRB2, ERI3 and SYN1. Residues 28-119 (PKPGGGWNTG…WNKPSKPKTN (92 aa)) are disordered. Tandem repeats lie at residues 54–62 (PQGGGGWGQ), 63–70 (PHGGGWGQ), 71–78 (PHGGGWGQ), 79–86 (PHGGGWGQ), 87–94 (PHGGGWGQ), and 95–103 (PHGGGGWGQ). Positions 54–103 (PQGGGGWGQPHGGGWGQPHGGGWGQPHGGGWGQPHGGGWGQPHGGGGWGQ) are 6 X 8 AA tandem repeats of P-H-G-G-G-W-G-Q. The span at 55 to 107 (QGGGGWGQPHGGGWGQPHGGGWGQPHGGGWGQPHGGGWGQPHGGGGWGQGGTH) shows a compositional bias: gly residues. Cu(2+)-binding residues include histidine 72, glycine 73, glycine 74, histidine 80, glycine 81, glycine 82, histidine 88, glycine 89, glycine 90, histidine 96, glycine 98, and glycine 99. Cysteine 190 and cysteine 225 are disulfide-bonded. N-linked (GlcNAc...) asparagine glycosylation is found at asparagine 192 and asparagine 208. Alanine 241 carries the GPI-anchor amidated alanine lipid modification. Positions 242–264 (SVILFSSPPVILLISFLIFLIVG) are cleaved as a propeptide — removed in mature form.

The protein belongs to the prion family. Monomer and homodimer. Has a tendency to aggregate into amyloid fibrils containing a cross-beta spine, formed by a steric zipper of superposed beta-strands. Soluble oligomers may represent an intermediate stage on the path to fibril formation. Copper binding may promote oligomerization. Interacts with GRB2, APP, ERI3/PRNPIP and SYN1. Mislocalized cytosolically exposed PrP interacts with MGRN1; this interaction alters MGRN1 subcellular location and causes lysosomal enlargement. Interacts with APP. Interacts with KIAA1191. Interacts with ADGRG6.

It is found in the cell membrane. It localises to the golgi apparatus. Its primary physiological function is unclear. May play a role in neuronal development and synaptic plasticity. May be required for neuronal myelin sheath maintenance. May promote myelin homeostasis through acting as an agonist for ADGRG6 receptor. May play a role in iron uptake and iron homeostasis. Soluble oligomers are toxic to cultured neuroblastoma cells and induce apoptosis (in vitro). Association with GPC1 (via its heparan sulfate chains) targets PRNP to lipid rafts. Also provides Cu(2+) or Zn(2+) for the ascorbate-mediated GPC1 deaminase degradation of its heparan sulfate side chains. This is Major prion protein (PRNP) from Bos indicus x Bos taurus (Hybrid cattle).